The following is a 107-amino-acid chain: MCIGIPMQVMAIEPGYAVCAGRGERRRVSSALVGDCQQGDWLLVFLDSARERIDALRAHEIDATLDMLQAALLGLDASEAQPRFELPSAMAREDLAVLSNSRDSSSY.

This sequence belongs to the HupF/HypC family.

In Cupriavidus necator (strain ATCC 17699 / DSM 428 / KCTC 22496 / NCIMB 10442 / H16 / Stanier 337) (Ralstonia eutropha), this protein is Hydrogenase expression/formation protein HoxL (hoxL).